The chain runs to 220 residues: Homeobox-leucine zipper protein ATHB-21 (220 aa).

Residues 26-48 (VPQQGGEAKPTRRRKRKSKSVVV) are disordered. A DNA-binding region (homeobox) is located at residues 58–117 (GWFRKRKLSDEQVRMLEISFEDDHKLESERKDRLASELGLDPRQVAVWFQNRRARWKNKR). The leucine-zipper stretch occupies residues 118 to 146 (VEDEYTKLKNAYETTVVEKCRLDSEVIHL).

The protein belongs to the HD-ZIP homeobox family. Class I subfamily. Widely expressed.

It localises to the nucleus. Probable transcription factor. This Arabidopsis thaliana (Mouse-ear cress) protein is Homeobox-leucine zipper protein ATHB-21 (ATHB-21).